We begin with the raw amino-acid sequence, 367 residues long: Glutamate 5-kinase (367 aa).

Residue Lys-10 coordinates ATP. Substrate is bound by residues Ser-50, Asp-137, and Asn-149. Residues 169–170 and 211–217 each bind ATP; these read TD and TGGMSTK. A PUA domain is found at 275 to 353; sequence AGEITVDEGA…QEIDAILGYE (79 aa).

This sequence belongs to the glutamate 5-kinase family.

It localises to the cytoplasm. The catalysed reaction is L-glutamate + ATP = L-glutamyl 5-phosphate + ADP. It functions in the pathway amino-acid biosynthesis; L-proline biosynthesis; L-glutamate 5-semialdehyde from L-glutamate: step 1/2. In terms of biological role, catalyzes the transfer of a phosphate group to glutamate to form L-glutamate 5-phosphate. The chain is Glutamate 5-kinase from Escherichia fergusonii (strain ATCC 35469 / DSM 13698 / CCUG 18766 / IAM 14443 / JCM 21226 / LMG 7866 / NBRC 102419 / NCTC 12128 / CDC 0568-73).